Here is a 259-residue protein sequence, read N- to C-terminus: Ribosomal RNA large subunit methyltransferase E (259 aa).

Positions 49, 51, 69, 88, and 112 each coordinate S-adenosyl-L-methionine. K152 serves as the catalytic Proton acceptor. The TRAM domain maps to 199–257 (PIAEGDEHTVEIVDTGDEGDGIARIEGYTLFVDDAAEGDTVDVTVTDLKPNYGFAERRD).

Belongs to the class I-like SAM-binding methyltransferase superfamily. RNA methyltransferase RlmE family.

The protein localises to the cytoplasm. It catalyses the reaction uridine(2552) in 23S rRNA + S-adenosyl-L-methionine = 2'-O-methyluridine(2552) in 23S rRNA + S-adenosyl-L-homocysteine + H(+). Specifically methylates the uridine in position 2552 of 23S rRNA at the 2'-O position of the ribose in the fully assembled 50S ribosomal subunit. This is Ribosomal RNA large subunit methyltransferase E from Halobacterium salinarum (strain ATCC 29341 / DSM 671 / R1).